Here is a 952-residue protein sequence, read N- to C-terminus: Eukaryotic initiation factor 4F subunit p150 (952 aa).

3 disordered regions span residues 1–77, 115–389, and 481–575; these read MTDE…NYNG, GSAP…DAGT, and VIPP…LVPS. The span at 7 to 16 shows a compositional bias: polar residues; it reads HPTQSASKQE. A compositionally biased stretch (low complexity) spans 29-46; sequence ESQQQRGYTNYNNGSNYT. Residues 47–56 show a composition bias toward polar residues; sequence QKKPYNSNRP. A compositionally biased stretch (low complexity) spans 65–74; the sequence is GPNRYNNRGN. Positions 140-151 are enriched in basic and acidic residues; that stretch reads SGEHLDLKEQHK. The span at 154-166 shows a compositional bias: polar residues; sequence LQSQERSTVSPQP. Serine 163 is modified (phosphoserine). The span at 175–191 shows a compositional bias: low complexity; the sequence is DSTSTSTPTPTPSTNDS. Threonine 181 carries the post-translational modification Phosphothreonine. Positions 188–299 are interaction with PAB1; the sequence is TNDSKASSEE…KEESTPKVLT (112 aa). Serine 195 is subject to Phosphoserine. Basic and acidic residues predominate over residues 218–228; the sequence is AALEKKRKEQL. Polar residues predominate over residues 229–244; that stretch reads EGSSGNNNIPMKTTPE. Composition is skewed to basic and acidic residues over residues 246–276, 283–294, and 309–333; these read VEEKGSDKPEVTEKTKPAEEKSAEPEVKQET, QGEKGQIKEEST, and QQKEREEKTEGKENKEVPVQEETKS. Polar residues predominate over residues 355–368; it reads TEQSNIDESATTPA. Serine 503 is modified (phosphoserine). Composition is skewed to basic and acidic residues over residues 504 to 521 and 532 to 569; these read RGHDFRNTSVRNMDDRAN and RMNDDRRSNRSYTSRRDRERGSYRNEEKREDDKPKEEV. Residues 607–850 enclose the MIF4G domain; it reads ERKMKSLLNK…IDIKELRHDK (244 aa). The interval 870-952 is disordered; that stretch reads EEERQRQLKN…ALMGESDDEE (83 aa). The span at 879-894 shows a compositional bias: low complexity; sequence NNSRSNSRRTNNSSNR. Serine 883 carries the phosphoserine modification. Threonine 888 is modified (phosphothreonine). Serine 892, serine 896, serine 908, and serine 948 each carry phosphoserine. A compositionally biased stretch (polar residues) spans 908–922; the sequence is SFITTRTYSQRNSQR.

This sequence belongs to the eukaryotic initiation factor 4G family. In terms of assembly, component of the eIF4F complex, which composition varies with external and internal environmental conditions. It is composed of at least eIF4A (TIF1/TIF2), eIF4E (TIF45) and eIF4G (TIF4631 or TIF4632). Interacts with PAT1 in a RNA-dependent manner.

The protein localises to the cytoplasm. Its subcellular location is the P-body. It localises to the stress granule. Functionally, component of the eIF4F complex, which interacts with the mRNA cap structure and serves as an initial point of assembly for the translation apparatus. Stimulates translation by interaction with polyadenylate-binding protein PAB1, bringing the 5'- and 3'-ends of the mRNA in proximity. The formation of this circular mRNP structure appears to be critical for the synergistic effects of the cap and the poly(A) tail in facilitating translation initiation, recycling of ribosomes, and mRNA stability. TIF4631 is probably essential when TIF4632 is missing. In Saccharomyces cerevisiae (strain ATCC 204508 / S288c) (Baker's yeast), this protein is Eukaryotic initiation factor 4F subunit p150.